Consider the following 580-residue polypeptide: Double-stranded RNA-binding protein Staufen homolog 1 (580 aa).

Ser2 is modified (N-acetylserine). Residues 34–44 (SIPSTTSSLPS) are compositionally biased toward polar residues. Residues 34 to 59 (SIPSTTSSLPSENAGRPIQNSALPSA) form a disordered region. The region spanning 72–162 (TPTVELNALC…AAKALRTLQS (91 aa)) is the DRBM 1 domain. Arg108 is modified (asymmetric dimethylarginine). The residue at position 115 (Arg115) is an Asymmetric dimethylarginine; alternate. Arg115 is modified (omega-N-methylarginine; alternate). Positions 158–189 (RTLQSEPLPERPEGRRPGEQVNGRESEEENLN) are disordered. The span at 165 to 182 (LPERPEGRRPGEQVNGRE) shows a compositional bias: basic and acidic residues. Phosphoserine is present on Ser183. A DRBM 2 domain is found at 191–258 (SEISQVFEIA…AIAVLEELKK (68 aa)). At Ser285 the chain carries Phosphoserine. The DRBM 3 domain occupies 293 to 361 (NPISRLAQIQ…AENMLEILGF (69 aa)). The disordered stretch occupies residues 367-404 (QPTKPALKSEEKTPIKKPGDGRKVTFFEPGSGDENGTS). The span at 373–391 (LKSEEKTPIKKPGDGRKVT) shows a compositional bias: basic and acidic residues. Phosphoserine is present on Ser397.

Binds tubulin. Binds with low affinity single-stranded RNA or DNA homopolymers. Interacts with CASC3 in an RNA-dependent manner. Identified in a mRNP complex, at least composed of DHX9, DDX3X, ELAVL1, HNRNPU, IGF2BP1, ILF3, PABPC1, PCBP2, PTBP2, STAU1, STAU2, SYNCRIP and YBX1. Interacts with the influenza virus nonstructural protein NS1.

It localises to the cytoplasm. It is found in the rough endoplasmic reticulum. Binds double-stranded RNA (regardless of the sequence) and tubulin. May play a role in specific positioning of mRNAs at given sites in the cell by cross-linking cytoskeletal and RNA components, and in stimulating their translation at the site. This is Double-stranded RNA-binding protein Staufen homolog 1 (STAU1) from Ailuropoda melanoleuca (Giant panda).